The primary structure comprises 447 residues: Dual specificity protein phosphatase CDC14C (447 aa).

The segment at 14 to 168 (PQDDVYVDIT…AMQYGFLNFN (155 aa)) is a. A linker region spans residues 169-182 (SFNLDEYEHYEKAE). The interval 183–349 (NGDLNWIIPD…EGDYFRQRLK (167 aa)) is b. The region spanning 184-344 (GDLNWIIPDR…TSLWLEGDYF (161 aa)) is the Tyrosine-protein phosphatase domain. The active-site Phosphocysteine intermediate is Cys-284. The helical transmembrane segment at 426–446 (FTLCSVVIWWIVCDYILPILL) threads the bilayer.

The protein belongs to the protein-tyrosine phosphatase family. Non-receptor class CDC14 subfamily.

It localises to the endoplasmic reticulum membrane. It catalyses the reaction O-phospho-L-tyrosyl-[protein] + H2O = L-tyrosyl-[protein] + phosphate. It carries out the reaction O-phospho-L-seryl-[protein] + H2O = L-seryl-[protein] + phosphate. The enzyme catalyses O-phospho-L-threonyl-[protein] + H2O = L-threonyl-[protein] + phosphate. In terms of biological role, dual-specificity phosphatase. Preferentially dephosphorylates proteins modified by proline-directed kinases. This chain is Dual specificity protein phosphatase CDC14C, found in Homo sapiens (Human).